Here is a 401-residue protein sequence, read N- to C-terminus: Argininosuccinate synthase (401 aa).

Residues 7-15 (AYSGGLDTS) and A34 each bind ATP. Y85 and S90 together coordinate L-citrulline. ATP is bound at residue G115. Residues T117, N121, and D122 each contribute to the L-aspartate site. N121 serves as a coordination point for L-citrulline. Residues R125, S174, S183, E259, and Y271 each contribute to the L-citrulline site.

The protein belongs to the argininosuccinate synthase family. Type 1 subfamily. In terms of assembly, homotetramer.

It localises to the cytoplasm. The catalysed reaction is L-citrulline + L-aspartate + ATP = 2-(N(omega)-L-arginino)succinate + AMP + diphosphate + H(+). It participates in amino-acid biosynthesis; L-arginine biosynthesis; L-arginine from L-ornithine and carbamoyl phosphate: step 2/3. This Desulforamulus reducens (strain ATCC BAA-1160 / DSM 100696 / MI-1) (Desulfotomaculum reducens) protein is Argininosuccinate synthase.